Reading from the N-terminus, the 547-residue chain is Intercellular adhesion molecule 3 (547 aa).

The first 29 residues, 1-29 (MATMVPSVLWPRACWTLLVCCLLTPGVQG), serve as a signal peptide directing secretion. Residues 30 to 485 (QEFLLRVEPQ…VMDIEAGSSH (456 aa)) lie on the Extracellular side of the membrane. Residues 46–103 (GGSLFVNCSTDCPSSEKIALETSLSKELVASGMGWAAFNLSNVTGNSRILCSVYCNGS) enclose the Ig-like C2-type 1 domain. N-linked (GlcNAc...) asparagine glycans are attached at residues asparagine 52, asparagine 84, asparagine 87, asparagine 101, asparagine 110, and asparagine 134. Cystine bridges form between cysteine 53-cysteine 96 and cysteine 57-cysteine 100. Residues 132–197 (GQNFTLRCQV…FSCRTELDMQ (66 aa)) form the Ig-like C2-type 2 domain. An intrachain disulfide couples cysteine 139 to cysteine 190. 9 N-linked (GlcNAc...) asparagine glycosylation sites follow: asparagine 206, asparagine 264, asparagine 295, asparagine 308, asparagine 320, asparagine 363, asparagine 389, asparagine 453, and asparagine 457. Residues 234–301 (ETSWPVDCTL…IVCNVTLGGE (68 aa)) enclose the Ig-like C2-type 3 domain. Cysteine 241 and cysteine 294 are disulfide-bonded. In terms of domain architecture, Ig-like C2-type 4 spans 329–382 (GSTVTVSCMAGARVQVTLDGVPAAAPGQPAQLQLNATESDDRRSFFCSATLEVD). Cysteine 336 and cysteine 375 are joined by a disulfide. Residues 416–469 (KTTHVLQCQARGNPYPELRCLKEGSSREVPVGIPFFVNVTHNGTYQCQASSSRG) enclose the Ig-like C2-type 5 domain. A disulfide bridge links cysteine 423 with cysteine 462. A helical membrane pass occupies residues 486–510 (FVPVFVAVLLTLGVVTIVLALMYVF). The Cytoplasmic segment spans residues 511 to 547 (REHKRSGSYHVREESTYLPLTSMQPTQAMGEEPSRAE).

Belongs to the immunoglobulin superfamily. ICAM family. As to quaternary structure, interacts with moesin/MSN. Post-translationally, upon stimulation by a physiologic stimuli becomes rapidly and transiently phosphorylated on serine residues. In terms of tissue distribution, leukocytes.

The protein localises to the membrane. Functionally, ICAM proteins are ligands for the leukocyte adhesion protein LFA-1 (integrin alpha-L/beta-2). ICAM3 is also a ligand for integrin alpha-D/beta-2. In association with integrin alpha-L/beta-2, contributes to apoptotic neutrophil phagocytosis by macrophages. The chain is Intercellular adhesion molecule 3 (ICAM3) from Pan troglodytes (Chimpanzee).